Reading from the N-terminus, the 342-residue chain is Succinoglycan biosynthesis protein ExoU (342 aa).

It belongs to the glycosyltransferase 2 family.

It localises to the cytoplasm. The protein operates within glycan metabolism; exopolysaccharide biosynthesis. Functionally, glycosyltransferase required for the synthesis of succinoglycan (EPS I). Needed for the addition of the sixth sugar (glucose), catalyzes the formation of a beta-1,6 linkage between the fifth and sixth sugar. This is Succinoglycan biosynthesis protein ExoU (exoU) from Rhizobium meliloti (strain 1021) (Ensifer meliloti).